Consider the following 209-residue polypeptide: Adenylate kinase (209 aa).

10 to 15 serves as a coordination point for ATP; it reads GAGKGT. The interval 30-59 is NMP; it reads STGDLFRAAIKEQTDLGKKVKAVIDSGALV. AMP is bound by residues threonine 31, arginine 36, 57 to 59, 85 to 88, and glutamine 92; these read ALV and GFPR. An LID region spans residues 121–158; that stretch reads GRRVCSSCGQSFHIEFVKPKKEGICDSCSGDLMIRPDD. Arginine 122 contacts ATP. Cysteine 125 and cysteine 128 together coordinate Zn(2+). Position 131 to 132 (131 to 132) interacts with ATP; it reads SF. Cysteine 145 and cysteine 148 together coordinate Zn(2+). AMP is bound by residues arginine 155 and arginine 166. An ATP-binding site is contributed by proline 194.

It belongs to the adenylate kinase family. Monomer.

It localises to the cytoplasm. It catalyses the reaction AMP + ATP = 2 ADP. Its pathway is purine metabolism; AMP biosynthesis via salvage pathway; AMP from ADP: step 1/1. Its function is as follows. Catalyzes the reversible transfer of the terminal phosphate group between ATP and AMP. Plays an important role in cellular energy homeostasis and in adenine nucleotide metabolism. This chain is Adenylate kinase, found in Treponema denticola (strain ATCC 35405 / DSM 14222 / CIP 103919 / JCM 8153 / KCTC 15104).